A 219-amino-acid polypeptide reads, in one-letter code: Small ribosomal subunit protein uS3c (219 aa).

Positions 39 to 118 (IRSFIRKYIQ…RLNIVITKVE (80 aa)) constitute a KH type-2 domain.

It belongs to the universal ribosomal protein uS3 family. As to quaternary structure, part of the 30S ribosomal subunit.

The protein localises to the plastid. In Cuscuta obtusiflora (Peruvian dodder), this protein is Small ribosomal subunit protein uS3c (rps3).